The primary structure comprises 254 residues: Reaction center protein L chain (254 aa).

3 helical membrane passes run 10 to 32, 60 to 88, and 93 to 115; these read FFGV…GAAL, GGLW…SRKL, and HVPA…RPLL. His-130 and His-150 together coordinate (7R,8Z)-bacteriochlorophyll b. Residues 148–175 traverse the membrane as a helical segment; the sequence is PMHMVAVTLFFTTTLALALHGSLVLAAI. Residue His-167 coordinates Fe cation. Phe-193 is a binding site for a ubiquinone. A helical transmembrane segment spans residues 202–227; that stretch reads GTLGIHRLGLFLALGAGFASATCILL. His-207 is a Fe cation binding site.

The protein belongs to the reaction center PufL/M/PsbA/D family. In terms of assembly, reaction center is composed of four bacteriochlorophylls, two bacteriopheophytins, two ubiquinones, one iron, and two highly hydrophobic polypeptide chains (designated L and M).

The protein localises to the cell inner membrane. Functionally, the reaction center is a membrane-bound complex that mediates the initial photochemical event in the electron transfer process of photosynthesis. The polypeptide is Reaction center protein L chain (pufL) (Acidiphilium organovorum).